The sequence spans 511 residues: GMP synthase [glutamine-hydrolyzing] (511 aa).

The 191-residue stretch at 5–195 (AILVLDFGSQ…VFKICQAQIN (191 aa)) folds into the Glutamine amidotransferase type-1 domain. The active-site Nucleophile is the Cys82. Residues His169 and Glu171 contribute to the active site. In terms of domain architecture, GMPS ATP-PPase spans 196–386 (WSLEGNLETI…LGIKKESLYR (191 aa)). 223–229 (SGGTDSL) serves as a coordination point for ATP.

As to quaternary structure, homodimer.

The enzyme catalyses XMP + L-glutamine + ATP + H2O = GMP + L-glutamate + AMP + diphosphate + 2 H(+). It participates in purine metabolism; GMP biosynthesis; GMP from XMP (L-Gln route): step 1/1. Functionally, catalyzes the synthesis of GMP from XMP. The chain is GMP synthase [glutamine-hydrolyzing] (guaA) from Borreliella burgdorferi (strain ATCC 35210 / DSM 4680 / CIP 102532 / B31) (Borrelia burgdorferi).